Reading from the N-terminus, the 200-residue chain is MLRLIVATHNPNKAKEIKDFFKGYPVEVVSMKELGIEEDIEEYGNTIEENALIKARFLRDKVKEGIVISDDTGLFVEYLGGQPGVYSARFAGENATYEENNRKLLKLLEGVPYEKRKAYFKTIIAVIEGEKEVLLEGVLEGHILDHLQGENGFGYDPVFFVDGIGKTLAELSLEEKNKISHRGKALLKLKEYILKRLEEN.

8–13 provides a ligand contact to substrate; the sequence is THNPNK. Mg(2+) contacts are provided by E41 and D71. The active-site Proton acceptor is the D71. Residues T72, 153–156, K176, and 181–182 contribute to the substrate site; these read FGYD and HR.

Belongs to the HAM1 NTPase family. In terms of assembly, homodimer. Mg(2+) is required as a cofactor.

The catalysed reaction is XTP + H2O = XMP + diphosphate + H(+). It carries out the reaction dITP + H2O = dIMP + diphosphate + H(+). The enzyme catalyses ITP + H2O = IMP + diphosphate + H(+). Functionally, pyrophosphatase that catalyzes the hydrolysis of nucleoside triphosphates to their monophosphate derivatives, with a high preference for the non-canonical purine nucleotides XTP (xanthosine triphosphate), dITP (deoxyinosine triphosphate) and ITP. Seems to function as a house-cleaning enzyme that removes non-canonical purine nucleotides from the nucleotide pool, thus preventing their incorporation into DNA/RNA and avoiding chromosomal lesions. This chain is dITP/XTP pyrophosphatase, found in Caldanaerobacter subterraneus subsp. tengcongensis (strain DSM 15242 / JCM 11007 / NBRC 100824 / MB4) (Thermoanaerobacter tengcongensis).